Here is a 66-residue protein sequence, read N- to C-terminus: Large ribosomal subunit protein bL35 (66 aa).

It belongs to the bacterial ribosomal protein bL35 family.

The protein is Large ribosomal subunit protein bL35 of Brucella anthropi (strain ATCC 49188 / DSM 6882 / CCUG 24695 / JCM 21032 / LMG 3331 / NBRC 15819 / NCTC 12168 / Alc 37) (Ochrobactrum anthropi).